The primary structure comprises 61 residues: Small ribosomal subunit protein uS14 (61 aa).

C24, C27, C40, and C43 together coordinate Zn(2+).

It belongs to the universal ribosomal protein uS14 family. Zinc-binding uS14 subfamily. In terms of assembly, part of the 30S ribosomal subunit. Contacts proteins S3 and S10. Zn(2+) serves as cofactor.

Functionally, binds 16S rRNA, required for the assembly of 30S particles and may also be responsible for determining the conformation of the 16S rRNA at the A site. This chain is Small ribosomal subunit protein uS14, found in Campylobacter curvus (strain 525.92).